Here is a 190-residue protein sequence, read N- to C-terminus: Signal peptidase I W (190 aa).

The helical transmembrane segment at 4–24 threads the bilayer; it reads ISNILYVIIFTLIIVLTLVVI. S45 is an active-site residue. Residues 143–163 form a helical membrane-spanning segment; the sequence is PIGTAVLLIVPGVMLLVYAFV.

The protein belongs to the peptidase S26B family.

It localises to the cell membrane. The enzyme catalyses Cleavage of hydrophobic, N-terminal signal or leader sequences from secreted and periplasmic proteins.. Required for the cleavage of the signal sequence of TasA and TapA, which are involved in biofilm formation. This is Signal peptidase I W from Bacillus subtilis (strain 168).